The sequence spans 78 residues: Acyl carrier protein (78 aa).

One can recognise a Carrier domain in the interval 2 to 77 (SDTADRVQKI…DATKYIEEHK (76 aa)). Position 37 is an O-(pantetheine 4'-phosphoryl)serine (Ser-37).

Belongs to the acyl carrier protein (ACP) family. Post-translationally, 4'-phosphopantetheine is transferred from CoA to a specific serine of apo-ACP by AcpS. This modification is essential for activity because fatty acids are bound in thioester linkage to the sulfhydryl of the prosthetic group.

The protein resides in the cytoplasm. Its pathway is lipid metabolism; fatty acid biosynthesis. Its function is as follows. Carrier of the growing fatty acid chain in fatty acid biosynthesis. This chain is Acyl carrier protein, found in Erythrobacter litoralis (strain HTCC2594).